The sequence spans 944 residues: MSDKKRINQIAKETGLTNAELVSAAQTLGFEVKSHSSSVTAEQAEKIIQSAKTGTDQTAKVAEKPVKKSQPKAAESAKKNKEDHPRTFAGKAVVEDPAILARIKAKEEAEKAAKVEVASTEHPVVTEKPKASEPVKKAEPKVEAKSEPKVEKVETKDNTATSKAEVKPENVADKKEPVVTEEKKKSLTQKPRIQIKVIKRAEDIKKEQAAARPEKKKFDKNRNDRNNRSDNRRPNQNGNGQGGNHYDKNRSSGQGQNQGQKRDKFASSGSAPATDSFTPATSGKTSRRDRDRKKSDNNRDNTKDGNRKGGPLRVNDNRNQVRNARNSNWNQKGGRGRYQNNQSSSVPATQRKFHELPESLEYEVGMNVQDIAKSIKREPAEIIKKLFMMGTMVNQNQSLDEDTIELILMDYGVTPVKKVEEDKSDIERLFVEDGYLKEENMVERPAVVTIMGHVDHGKTTLLDRFRESRVTEGEAGGITQHIGAYQIKANGKKITFLDTPGHEAFTSMRARGASVTDITILVVAADDGVMPQTIEAINHSKAAGVPIIVAINKIDKPGANPQRVTQELTEHGVFPVAWDPENGSEFVEISAKFNQNLDELLDTVLLVAEVQELKADPTVRAIGTVVEARLDQGKGAIATLLVQQGTLHVQDPIVVGNTYGRVRTMTNDLGRRIKEAGPSTPIELTGLSDVPQAGDHFAVFEDEKAARAAGEERAKRAQLIKRQNTRRVNLDNLFDTLKEGQTKSVNIIIKADVQGSAEALAASLQKIEVEGVKVDIVHSAVGAISESDISLAAASNAIIIGFNVRPTGLAREQAAQEEVDIRLHSIIYKVIEEVETAMRGMLDPEFKEEIIGEAIVRETFNVSKVGTIAGFMVIRGKVARDASVRVIREGVVIHDGAIASLKHFKDDVKEVGNAQEGGLMVEDFNDVEIDDTFEVYKMVEIERK.

Disordered stretches follow at residues 50-91 (SAKT…FAGK) and 114-349 (KVEV…VPAT). Composition is skewed to basic and acidic residues over residues 75-86 (ESAKKNKEDHPR), 124-157 (VVTEKPKASEPVKKAEPKVEAKSEPKVEKVETKD), 164-185 (AEVKPENVADKKEPVVTEEKKK), and 199-233 (KRAEDIKKEQAAARPEKKKFDKNRNDRNNRSDNRR). Residues 267 to 280 (SSGSAPATDSFTPA) show a composition bias toward polar residues. A compositionally biased stretch (basic and acidic residues) spans 286-307 (SRRDRDRKKSDNNRDNTKDGNR). 2 stretches are compositionally biased toward polar residues: residues 317 to 331 (NRNQVRNARNSNWNQ) and 338 to 348 (YQNNQSSSVPA). The tr-type G domain maps to 443–614 (ERPAVVTIMG…LLVAEVQELK (172 aa)). Residues 452-459 (GHVDHGKT) form a G1 region. 452–459 (GHVDHGKT) lines the GTP pocket. A G2 region spans residues 477-481 (GITQH). Positions 498-501 (DTPG) are G3. Residues 498–502 (DTPGH) and 552–555 (NKID) each bind GTP. Positions 552-555 (NKID) are G4. Residues 590-592 (SAK) form a G5 region.

This sequence belongs to the TRAFAC class translation factor GTPase superfamily. Classic translation factor GTPase family. IF-2 subfamily.

It localises to the cytoplasm. In terms of biological role, one of the essential components for the initiation of protein synthesis. Protects formylmethionyl-tRNA from spontaneous hydrolysis and promotes its binding to the 30S ribosomal subunits. Also involved in the hydrolysis of GTP during the formation of the 70S ribosomal complex. The polypeptide is Translation initiation factor IF-2 (infB) (Lactococcus lactis subsp. lactis (strain IL1403) (Streptococcus lactis)).